The sequence spans 493 residues: Cytochrome P450 monooxygenase olcG (493 aa).

A helical membrane pass occupies residues 15–35; that stretch reads GILATGALVIFVALFLATFQF. C429 contributes to the heme binding site.

This sequence belongs to the cytochrome P450 family. Requires heme as cofactor.

The protein localises to the membrane. It functions in the pathway secondary metabolite biosynthesis; terpenoid biosynthesis. Functionally, cytochrome P450 monooxygenase; part of the gene cluster that mediates the biosynthesis of 15-deoxyoxalicine B. The first step of the pathway is the synthesis of nicotinyl-CoA from nicotinic acid by the nicotinic acid-CoA ligase olcI. Nicotinyl-CoA is then a substrate of polyketide synthase olcA to produce 4-hydroxy-6-(3-pyridinyl)-2H-pyran-2-one (HPPO) which is further prenylated by the polyprenyl transferase olcH to yield geranylgeranyl-HPPO. Geranylgeranyl pyrophosphate is provided by the cluster-specific geranylgeranyl pyrophosphate synthase olcC. The FAD-dependent monooxygenase olcE catalyzes the epoxidation of geranylgeranyl-HPPO and the terpene cyclase olcD catalyzes the cyclization of the terpenoid component, resulting in the formation of the tricyclic terpene moiety seen in predecaturin E. The cytochrome P450 monooxygenase then catalyzes the allylic oxidation of predecaturin E, which is followed by spirocylization with concomitant loss of one molecule of water to form decaturin E. Decaturin E is the substrate of the cytochrome P450 monooxygenase olcJ which hydroxylates it at the C-29 position to form decaturin F. The short-chain dehydrogenase/reductase olcF may catalyze the oxidation of decaturin F to generate the 29-hydroxyl-27-one intermediate, and subsequent hemiacetal formation probably leads to the formation of decaturin C. The dioxygenase olcK may be a peroxisomal enzyme that catalyzes the hydroxylation of decaturin C into decaturin A once decaturin C is shuttled into the peroxisome by the MFS transporter olcL. Finally the cytochrome P450 monooxygenase olcB catalyzes the oxidative rearrangement to yield 15-deoxyoxalicine B. In the absence of olcJ, decaturin E may be shunted to a pathway in which it is oxidized to a ketone, possibly by olcF, to form decaturin D, which undergoes further allylic oxidation to yield decaturin G. Moreover, in the absence of oclK or oclL, oclB can convert decaturin C into 15-deoxyoxalicine A. The polypeptide is Cytochrome P450 monooxygenase olcG (Penicillium canescens).